A 31-amino-acid polypeptide reads, in one-letter code: Cliotide T13 (31 aa).

The cyclopeptide (Asp-Asn) cross-link spans 1–31 (DTTPCGESCVWIPCVSSIVGCSCQNKVCYQN). 3 cysteine pairs are disulfide-bonded: C5/C21, C9/C23, and C14/C28.

Contains 3 disulfide bonds. Post-translationally, this is a cyclic peptide. As to expression, expressed in seed but not in root nodules.

In terms of biological role, probably participates in a plant defense mechanism. Not active against Gram-negative bacterium E.coli ATCC 700926 or Gram-positive bacterium S.aureus ATCC 12600 up to a concentration of 100 uM under low-salt conditions. This chain is Cliotide T13, found in Clitoria ternatea (Butterfly pea).